The primary structure comprises 213 residues: Charged multivesicular body protein 2b (213 aa).

Position 2 is an N-acetylalanine (Ala2). The stretch at 25–55 forms a coiled coil; sequence QRAIIRDRAALEKQEKQLELEIKKMAKIGNK. Residues 179-194 are compositionally biased toward low complexity; that stretch reads AKAPSAARSLPSASTS. The tract at residues 179 to 199 is disordered; sequence AKAPSAARSLPSASTSKATIS. Position 199 is a phosphoserine (Ser199). The MIT-interacting motif motif lies at 201 to 211; sequence EEIERQLKALG.

The protein belongs to the SNF7 family. As to quaternary structure, probable core component of the endosomal sorting required for transport complex III (ESCRT-III). ESCRT-III components are thought to multimerize to form a flat lattice on the perimeter membrane of the endosome. Several assembly forms of ESCRT-III may exist that interact and act sequentially. Interacts with CHMP2A. Interacts with VPS4A. Interacts with VPS4B; the interaction is direct. Widely expressed. Expressed in brain, heart, skeletal muscle, spleen, kidney, liver, small intestine, pancreas, lung, placenta and leukocytes. In brain, it is expressed in cerebellum, cerebral cortex, medulla, spinal cord, occipital lobe, frontal lobe, temporal lobe and putamen.

The protein localises to the cytoplasm. Its subcellular location is the cytosol. It localises to the late endosome membrane. Functionally, probable core component of the endosomal sorting required for transport complex III (ESCRT-III) which is involved in multivesicular bodies (MVBs) formation and sorting of endosomal cargo proteins into MVBs. MVBs contain intraluminal vesicles (ILVs) that are generated by invagination and scission from the limiting membrane of the endosome and mostly are delivered to lysosomes enabling degradation of membrane proteins, such as stimulated growth factor receptors, lysosomal enzymes and lipids. The MVB pathway appears to require the sequential function of ESCRT-O, -I,-II and -III complexes. ESCRT-III proteins mostly dissociate from the invaginating membrane before the ILV is released. The ESCRT machinery also functions in topologically equivalent membrane fission events, such as the terminal stages of cytokinesis and the budding of enveloped viruses (HIV-1 and other lentiviruses). ESCRT-III proteins are believed to mediate the necessary vesicle extrusion and/or membrane fission activities, possibly in conjunction with the AAA ATPase VPS4. The chain is Charged multivesicular body protein 2b (CHMP2B) from Homo sapiens (Human).